The following is a 210-amino-acid chain: HTH-type transcriptional repressor FabR (210 aa).

Residues 10-70 (KTRRSLVEAA…TMVDESGLML (61 aa)) enclose the HTH tetR-type domain. The H-T-H motif DNA-binding region spans 33–52 (SLREVAREAGIAPTSFYRHF).

As to quaternary structure, homodimer.

It is found in the cytoplasm. Its function is as follows. Represses the transcription of fabB, involved in unsaturated fatty acid (UFA) biosynthesis. By controlling UFA production, FabR directly influences the physical properties of the membrane bilayer. This is HTH-type transcriptional repressor FabR from Salmonella choleraesuis (strain SC-B67).